A 510-amino-acid chain; its full sequence is NAD(P)H-quinone oxidoreductase subunit 2 B, chloroplastic (510 aa).

Helical transmembrane passes span 24–44 (LLLF…GLIL), 57–77 (IPWL…ALLF), 99–119 (IFQF…VEYI), 124–144 (MAIT…MFLC), 150–170 (ITIF…SGYT), 183–203 (YLLM…WLYG), 229–249 (ISIA…PAPF), 295–315 (WHLL…LIAI), 323–343 (MLAY…IVGD), 354–374 (YMLF…LFGL), 395–415 (ALSS…AGFF), 418–438 (LHLF…IGLL), and 484–504 (MIVC…IIAI).

Belongs to the complex I subunit 2 family. In terms of assembly, NDH is composed of at least 16 different subunits, 5 of which are encoded in the nucleus.

It localises to the plastid. The protein resides in the chloroplast thylakoid membrane. The catalysed reaction is a plastoquinone + NADH + (n+1) H(+)(in) = a plastoquinol + NAD(+) + n H(+)(out). It catalyses the reaction a plastoquinone + NADPH + (n+1) H(+)(in) = a plastoquinol + NADP(+) + n H(+)(out). NDH shuttles electrons from NAD(P)H:plastoquinone, via FMN and iron-sulfur (Fe-S) centers, to quinones in the photosynthetic chain and possibly in a chloroplast respiratory chain. The immediate electron acceptor for the enzyme in this species is believed to be plastoquinone. Couples the redox reaction to proton translocation, and thus conserves the redox energy in a proton gradient. In Drimys granadensis, this protein is NAD(P)H-quinone oxidoreductase subunit 2 B, chloroplastic.